The following is a 2173-amino-acid chain: Mediator of RNA polymerase II transcription subunit 12 (2173 aa).

8 disordered regions span residues 1–34 (MAAFGVLSYEHRPLKRPRLGPPDVYPQDPKQKED), 318–345 (GGHQAHGISAQQGNALPPTPTSQPAGGN), 630–718 (ASNS…KGMD), 784–804 (KSTAETGGEEGQKRKRSKPEA), 1380–1404 (MNSSNPSWNGSAVSGSSVSNSNSAS), 1443–1467 (ELEKGQHLGPSSRKERDRQKQKSMS), 1737–1780 (EEEP…VKQE), and 2020–2068 (QGIH…FRPQ). Over residues 702–717 (QAQEQESKSTAKDKGM) the composition is skewed to basic and acidic residues. Low complexity predominate over residues 1389–1404 (GSAVSGSSVSNSNSAS). Basic and acidic residues-rich tracts occupy residues 1443 to 1462 (ELEKGQHLGPSSRKERDRQK) and 1747 to 1759 (EPDKKLDTAKVEK). Over residues 2034 to 2057 (QQQQQQQQQQQQQQQQQQVHQQQQ) the composition is skewed to low complexity.

Belongs to the Mediator complex subunit 12 family. In terms of assembly, component of the Mediator complex.

The protein localises to the nucleus. Component of the Mediator complex, a coactivator involved in regulated gene transcription of nearly all RNA polymerase II-dependent genes. Mediator functions as a bridge to convey information from gene-specific regulatory proteins to the basal RNA polymerase II transcription machinery. Mediator is recruited to promoters by direct interactions with regulatory proteins and serves as a scaffold for the assembly of a functional preinitiation complex with RNA polymerase II and the general transcription factors. Required for development of the body axis, brain, ear, kidney, forelimb and neural crest and for pigmentation. Acts as a coactivator for sox9a and/or sox9b promoting the expression of several neuronal determination genes. This Danio rerio (Zebrafish) protein is Mediator of RNA polymerase II transcription subunit 12 (med12).